The following is a 365-amino-acid chain: UDP-N-acetylglucosamine--N-acetylmuramyl-(pentapeptide) pyrophosphoryl-undecaprenol N-acetylglucosamine transferase (365 aa).

Residues Thr12–Gly14, Asn123, Arg166, Ser194, and Gln295 each bind UDP-N-acetyl-alpha-D-glucosamine.

Belongs to the glycosyltransferase 28 family. MurG subfamily.

It is found in the cell inner membrane. The catalysed reaction is di-trans,octa-cis-undecaprenyl diphospho-N-acetyl-alpha-D-muramoyl-L-alanyl-D-glutamyl-meso-2,6-diaminopimeloyl-D-alanyl-D-alanine + UDP-N-acetyl-alpha-D-glucosamine = di-trans,octa-cis-undecaprenyl diphospho-[N-acetyl-alpha-D-glucosaminyl-(1-&gt;4)]-N-acetyl-alpha-D-muramoyl-L-alanyl-D-glutamyl-meso-2,6-diaminopimeloyl-D-alanyl-D-alanine + UDP + H(+). Its pathway is cell wall biogenesis; peptidoglycan biosynthesis. Cell wall formation. Catalyzes the transfer of a GlcNAc subunit on undecaprenyl-pyrophosphoryl-MurNAc-pentapeptide (lipid intermediate I) to form undecaprenyl-pyrophosphoryl-MurNAc-(pentapeptide)GlcNAc (lipid intermediate II). The protein is UDP-N-acetylglucosamine--N-acetylmuramyl-(pentapeptide) pyrophosphoryl-undecaprenol N-acetylglucosamine transferase of Phenylobacterium zucineum (strain HLK1).